Here is a 408-residue protein sequence, read N- to C-terminus: NADH-quinone oxidoreductase subunit D (408 aa).

The protein belongs to the complex I 49 kDa subunit family. NDH-1 is composed of 14 different subunits. Subunits NuoB, C, D, E, F, and G constitute the peripheral sector of the complex.

The protein resides in the cell inner membrane. The catalysed reaction is a quinone + NADH + 5 H(+)(in) = a quinol + NAD(+) + 4 H(+)(out). NDH-1 shuttles electrons from NADH, via FMN and iron-sulfur (Fe-S) centers, to quinones in the respiratory chain. The immediate electron acceptor for the enzyme in this species is believed to be ubiquinone. Couples the redox reaction to proton translocation (for every two electrons transferred, four hydrogen ions are translocated across the cytoplasmic membrane), and thus conserves the redox energy in a proton gradient. This is NADH-quinone oxidoreductase subunit D from Wolinella succinogenes (strain ATCC 29543 / DSM 1740 / CCUG 13145 / JCM 31913 / LMG 7466 / NCTC 11488 / FDC 602W) (Vibrio succinogenes).